Here is a 477-residue protein sequence, read N- to C-terminus: Cytoplasmic 60S subunit biogenesis factor ZNF622 (477 aa).

N-acetylalanine is present on A2. 2 consecutive U1-type zinc fingers follow at residues 4–28 (YTCI…TDWH) and 67–91 (TYCT…SRRH). Positions 135–212 (AIKAQPSMSP…EDLDGDDWED (78 aa)) are disordered. The segment covering 167–178 (GTHDRDPSEKPP) has biased composition (basic and acidic residues). Positions 196 to 212 (EDSEEEEEDLDGDDWED) are enriched in acidic residues. At S276 the chain carries Phosphoserine.

Belongs to the REI1 family. Homo- and heterodimer. Associates with pre-60S ribosomal particles. Interacts with MELK and MYBL2. Interacts with DNAJC21. Post-translationally, phosphorylated by MELK. The phosphorylation may redirect the protein to the nucleus. In terms of processing, ubiquitinated by HECTD1, leading to its degradation. As to expression, expressed in lung, kidney, spleen, liver and brain with lowest expression in kidney.

The protein resides in the cytoplasm. Its subcellular location is the nucleus. Its function is as follows. Pre-60S-associated cytoplasmic factor involved in the cytoplasmic maturation of the 60S subunit. This chain is Cytoplasmic 60S subunit biogenesis factor ZNF622, found in Homo sapiens (Human).